The following is a 311-amino-acid chain: HPr kinase/phosphorylase (311 aa).

Residues His-138 and Lys-159 contribute to the active site. ATP is bound at residue 153 to 160; that stretch reads GDSGIGKS. Residue Ser-160 coordinates Mg(2+). Catalysis depends on Asp-177, which acts as the Proton acceptor; for phosphorylation activity. Proton donor; for dephosphorylation activity. An important for the catalytic mechanism of both phosphorylation and dephosphorylation region spans residues 201–210; the sequence is LEIRGVGIID. Glu-202 contributes to the Mg(2+) binding site. The active site involves Arg-243. The tract at residues 264–269 is important for the catalytic mechanism of dephosphorylation; sequence PVKTGR.

Belongs to the HPrK/P family. In terms of assembly, homohexamer. The cofactor is Mg(2+).

The enzyme catalyses [HPr protein]-L-serine + ATP = [HPr protein]-O-phospho-L-serine + ADP + H(+). It catalyses the reaction [HPr protein]-O-phospho-L-serine + phosphate + H(+) = [HPr protein]-L-serine + diphosphate. Its function is as follows. Catalyzes the ATP- as well as the pyrophosphate-dependent phosphorylation of a specific serine residue in HPr, a phosphocarrier protein of the phosphoenolpyruvate-dependent sugar phosphotransferase system (PTS). HprK/P also catalyzes the pyrophosphate-producing, inorganic phosphate-dependent dephosphorylation (phosphorolysis) of seryl-phosphorylated HPr (P-Ser-HPr). The two antagonistic activities of HprK/P are regulated by several intracellular metabolites, which change their concentration in response to the absence or presence of rapidly metabolisable carbon sources (glucose, fructose, etc.) in the growth medium. Therefore, by controlling the phosphorylation state of HPr, HPrK/P is a sensor enzyme that plays a major role in the regulation of carbon metabolism and sugar transport: it mediates carbon catabolite repression (CCR), and regulates PTS-catalyzed carbohydrate uptake and inducer exclusion. The sequence is that of HPr kinase/phosphorylase from Streptococcus agalactiae serotype Ia (strain ATCC 27591 / A909 / CDC SS700).